Consider the following 351-residue polypeptide: Translation initiation factor eIF2B subunit beta (351 aa).

Belongs to the eIF-2B alpha/beta/delta subunits family. As to quaternary structure, component of the translation initiation factor 2B (eIF2B) complex which is a heterodecamer of two sets of five different subunits: alpha, beta, gamma, delta and epsilon. Subunits alpha, beta and delta comprise a regulatory subcomplex and subunits epsilon and gamma comprise a catalytic subcomplex. Within the complex, the hexameric regulatory complex resides at the center, with the two heterodimeric catalytic subcomplexes bound on opposite sides.

The protein resides in the cytoplasm. It is found in the cytosol. With respect to regulation, activated by the chemical integrated stress response (ISR) inhibitor ISRIB which stimulates guanine nucleotide exchange factor activity for both phosphorylated and unphosphorylated eIF2. Acts as a component of the translation initiation factor 2B (eIF2B) complex, which catalyzes the exchange of GDP for GTP on eukaryotic initiation factor 2 (eIF2) gamma subunit. Its guanine nucleotide exchange factor activity is repressed when bound to eIF2 complex phosphorylated on the alpha subunit, thereby limiting the amount of methionyl-initiator methionine tRNA available to the ribosome and consequently global translation is repressed. The chain is Translation initiation factor eIF2B subunit beta (Eif2b2) from Mus musculus (Mouse).